The sequence spans 282 residues: Elongation factor Ts (282 aa).

The interval T79 to V82 is involved in Mg(2+) ion dislocation from EF-Tu.

This sequence belongs to the EF-Ts family.

The protein resides in the cytoplasm. Functionally, associates with the EF-Tu.GDP complex and induces the exchange of GDP to GTP. It remains bound to the aminoacyl-tRNA.EF-Tu.GTP complex up to the GTP hydrolysis stage on the ribosome. The sequence is that of Elongation factor Ts from Shewanella woodyi (strain ATCC 51908 / MS32).